Consider the following 318-residue polypeptide: NLP effector protein 7 (318 aa).

Positions 1-19 (MRLFAFLWSSVAFLSTVQA) are cleaved as a signal peptide. Low complexity predominate over residues 23-41 (QTASQTQDDSSTPTPTPTD). Disordered stretches follow at residues 23 to 42 (QTAS…PTDK) and 51 to 96 (RTKT…TPDP). Residues 55 to 65 (PMATPNRTIMP) show a composition bias toward polar residues. Asparagine 60 carries an N-linked (GlcNAc...) asparagine glycan. The span at 73 to 96 (TEPPTPEPTYLPTPSPTPAPTPDP) shows a compositional bias: pro residues. The short motif at 185-195 (AIMYSWYFPKD) is the Conserved undecapeptide motif I element. Residues 202–208 (GHRHDWE) carry the Hepta-peptide GHRHDWE motif II motif.

It belongs to the Necrosis inducing protein (NPP1) family.

It localises to the secreted. Functionally, secreted effector that contributes moderately to virulence during infection by P.capsici. Does not cause visible reaction of C.annuum for several days after inoculation, but by 7 days after inoculation, small necrotic lesions become visible. Leads only to chlorotic areas, without necrosis at 7 days after non-host N.benthamiana leaves infection. The chain is NLP effector protein 7 from Phytophthora capsici.